Here is a 466-residue protein sequence, read N- to C-terminus: Putative ABC transporter ATP-binding protein MG065 (466 aa).

The ABC transporter domain maps to 233 to 463; that stretch reads IELKNVYKYI…NLNPKQVEEI (231 aa). ATP is bound at residue 269–276; the sequence is GPSGSGKT.

This sequence belongs to the ABC transporter superfamily.

In Mycoplasma genitalium (strain ATCC 33530 / DSM 19775 / NCTC 10195 / G37) (Mycoplasmoides genitalium), this protein is Putative ABC transporter ATP-binding protein MG065.